Here is a 544-residue protein sequence, read N- to C-terminus: MTLSVPDCAEMNRIRMSNHRKMSLGSAPLIANGRPSPPPRRTSLAESIRTLAFTARRNSSPLYRKSTKKLKKSRLVGKNGICNVYNTNVPKKDRQYLRDIFTTMIDVKWRWMLMLFASAFVLSWSIFGTTYYLIALVHGDLSLPTPVNHTACVMNLDSVYSSFLFAVETHHTIGYGHRYITTECYLAGAIVCLQAICALLLQSFMVGIVFAKMARPKKRAETIIFSDKAVICLRDGQLCFLCRVGDMRNTHLVEAHVRLQFITDRETNEGEIEPLHQFEMKVGPSIADDDRLFLVWPTTLCHVIDSRSPLYNYNQQTLMSAQFEIIVLLEGIVESTGMTAQAKTSYLPSEVLWGHRFRKLVTYQRSNGSYQIDYDLFHSTYPVRTPAMSPAEFYSSKPNLKDYYCHDSHEHKLEDNRSSDSTPLPSPSPYSYPSTPLNHFQSSSNSPVFSNNHSKFNTEAVTCEAGMLCPPTIVVQCPSTCASPNHMRRTRNQMDKSRTSSSCDLTRPSTALSDLEEECSDSGSPTKCQSPPVVPIHIEIVSET.

Over 1-109 (MTLSVPDCAE…IFTTMIDVKW (109 aa)) the chain is Cytoplasmic. Residues 110–134 (RWMLMLFASAFVLSWSIFGTTYYLI) traverse the membrane as a helical segment. The Extracellular segment spans residues 135–158 (ALVHGDLSLPTPVNHTACVMNLDS). The helical; Pore-forming intramembrane region spans 159–170 (VYSSFLFAVETH). The segment at residues 171 to 177 (HTIGYGH) is an intramembrane region (pore-forming). The Selectivity filter signature appears at 172 to 177 (TIGYGH). At 178 to 186 (RYITTECYL) the chain is on the extracellular side. A helical transmembrane segment spans residues 187 to 208 (AGAIVCLQAICALLLQSFMVGI). The Cytoplasmic portion of the chain corresponds to 209–544 (VFAKMARPKK…PIHIEIVSET (336 aa)). Disordered regions lie at residues 411-448 (HKLE…NSPV) and 512-533 (LSDL…SPPV). Positions 438–448 (NHFQSSSNSPV) are enriched in polar residues.

It belongs to the inward rectifier-type potassium channel (TC 1.A.2.1) family. Expressed in neurons in the head and tail with no expression detected in non-neuronal cells in these regions. Also detected in the egg-laying system of adult hermaphordites with strong expression in the HSN motor neurons and weak expression in vulval muscles.

The protein localises to the membrane. It is found in the perikaryon. The protein resides in the cell projection. Functionally, inward rectifier potassium channels are characterized by a greater tendency to allow potassium to flow into the cell rather than out of it. Required for modulation of the activity of the hermaphrodite-specific neurons (HSNs) by the G-protein coupled neuropeptide receptor egl-6 which in turn controls egg-laying behavior. This Caenorhabditis elegans protein is Inward rectifier potassium channel irk-1 (irk-1).